Reading from the N-terminus, the 60-residue chain is Large ribosomal subunit protein uL30 (60 aa).

It belongs to the universal ribosomal protein uL30 family. In terms of assembly, part of the 50S ribosomal subunit.

The sequence is that of Large ribosomal subunit protein uL30 from Kineococcus radiotolerans (strain ATCC BAA-149 / DSM 14245 / SRS30216).